Consider the following 738-residue polypeptide: AP-4 complex subunit beta-1 (738 aa).

A hinge region spans residues 534–600; the sequence is CSPKSDPSLG…NASFATSGHL (67 aa). The tract at residues 601–738 is ear; mediates interaction with TEPSIN; the sequence is ISEENKEGAQ…VIGTVGDIKS (138 aa).

It belongs to the adaptor complexes large subunit family. In terms of assembly, adaptor protein complex 4 (AP-4) is a heterotetramer composed of two large adaptins (epsilon-type subunit AP4E1 and beta-type subunit AP4B1), a medium adaptin (mu-type subunit AP4M1) and a small adaptin (sigma-type AP4S1). Interacts with TEPSIN; this interaction requires the presence of a functional AP-4 complex. Interacts with GRIA2; probably indirect it mediates the somatodendritic localization of GRIA2 in neurons.

It localises to the golgi apparatus. It is found in the trans-Golgi network membrane. Its function is as follows. Component of the adaptor protein complex 4 (AP-4). Adaptor protein complexes are vesicle coat components involved both in vesicle formation and cargo selection. They control the vesicular transport of proteins in different trafficking pathways. AP-4 forms a non clathrin-associated coat on vesicles departing the trans-Golgi network (TGN) and may be involved in the targeting of proteins from the trans-Golgi network (TGN) to the endosomal-lysosomal system. It is also involved in protein sorting to the basolateral membrane in epithelial cells and the proper asymmetric localization of somatodendritic proteins in neurons. AP-4 is involved in the recognition and binding of tyrosine-based sorting signals found in the cytoplasmic part of cargos, but may also recognize other types of sorting signal. In Mus musculus (Mouse), this protein is AP-4 complex subunit beta-1.